Consider the following 900-residue polypeptide: Protein translocase subunit SecA (900 aa).

ATP-binding positions include Gln87, Gly105–Thr109, and Asp510. Residues Asp857–Lys890 are disordered. Low complexity predominate over residues Asp860–Gly872. Zn(2+) is bound by residues Cys884, Cys886, Cys895, and His896.

This sequence belongs to the SecA family. As to quaternary structure, monomer and homodimer. Part of the essential Sec protein translocation apparatus which comprises SecA, SecYEG and auxiliary proteins SecDF-YajC and YidC. It depends on Zn(2+) as a cofactor.

Its subcellular location is the cell inner membrane. It localises to the cytoplasm. It catalyses the reaction ATP + H2O + cellular proteinSide 1 = ADP + phosphate + cellular proteinSide 2.. In terms of biological role, part of the Sec protein translocase complex. Interacts with the SecYEG preprotein conducting channel. Has a central role in coupling the hydrolysis of ATP to the transfer of proteins into and across the cell membrane, serving both as a receptor for the preprotein-SecB complex and as an ATP-driven molecular motor driving the stepwise translocation of polypeptide chains across the membrane. The polypeptide is Protein translocase subunit SecA (Marinomonas sp. (strain MWYL1)).